The following is a 1405-amino-acid chain: DNA-directed RNA polymerase subunit beta' (1405 aa).

Zn(2+) is bound by residues cysteine 70, cysteine 72, cysteine 85, and cysteine 88. Residues aspartate 460, aspartate 462, and aspartate 464 each coordinate Mg(2+). Positions 814, 888, 895, and 898 each coordinate Zn(2+).

This sequence belongs to the RNA polymerase beta' chain family. In terms of assembly, the RNAP catalytic core consists of 2 alpha, 1 beta, 1 beta' and 1 omega subunit. When a sigma factor is associated with the core the holoenzyme is formed, which can initiate transcription. Requires Mg(2+) as cofactor. Zn(2+) serves as cofactor.

It carries out the reaction RNA(n) + a ribonucleoside 5'-triphosphate = RNA(n+1) + diphosphate. DNA-dependent RNA polymerase catalyzes the transcription of DNA into RNA using the four ribonucleoside triphosphates as substrates. The chain is DNA-directed RNA polymerase subunit beta' from Shewanella oneidensis (strain ATCC 700550 / JCM 31522 / CIP 106686 / LMG 19005 / NCIMB 14063 / MR-1).